The following is a 1284-amino-acid chain: ATP-dependent helicase fft2 (1284 aa).

2 stretches are compositionally biased toward polar residues: residues 1–10 (MLPYNSNYLS) and 20–57 (ENPQSEVYGSSQTGLPSSYGNPQSYGTPPVQQSSAMYG). Disordered stretches follow at residues 1–57 (MLPY…AMYG), 185–252 (AQPP…LPPV), 317–339 (KQSPVASNMPTYGSSNRTVQSQK), 353–388 (STQASLMPSYTRKTSNASKKLTTEEDEFYDSEEEPE), and 446–465 (PDDVPSKPGRRGRRREKNPM). Residues 201-241 (RSNSRSSARSTARSAPRSTQRSRSSSANPVTTPPVNNTLLT) are compositionally biased toward low complexity. Polar residues-rich tracts occupy residues 320-339 (PVASNMPTYGSSNRTVQSQK) and 353-372 (STQASLMPSYTRKTSNASKK). A Phosphoserine modification is found at Ser323. Positions 376–388 (EEDEFYDSEEEPE) are enriched in acidic residues. Ser383 is subject to Phosphoserine. Residues 562-730 (HLLYQQKLSG…VSLLAFILPN (169 aa)) form the Helicase ATP-binding domain. 575–582 (DEMGLGKT) provides a ligand contact to ATP. Residues 681–684 (DEGH) carry the DEGH box motif. Residues 816-839 (QQLRRDDKRNKRSKNDEESDGKSL) form a disordered region. Residues 818–831 (LRRDDKRNKRSKND) are compositionally biased toward basic and acidic residues. The Helicase C-terminal domain maps to 928–1079 (VLKELLPKMK…SLSSDGKDRE (152 aa)). The disordered stretch occupies residues 1088-1284 (DMLDEENNGN…SEVDNNAAKD (197 aa)). A compositionally biased stretch (polar residues) spans 1095–1107 (NGNNTKPEITGNE). The segment covering 1143–1177 (EKTDLADGDEKANIKTEMKSETVEGDNKELRETMK) has biased composition (basic and acidic residues). Residues 1180–1194 (NVQTDSNAAVPSSKS) show a composition bias toward polar residues. 2 stretches are compositionally biased toward basic and acidic residues: residues 1243 to 1256 (QLEKPEIEESKKPD) and 1266 to 1284 (EEEKPKNKESEVDNNAAKD).

It belongs to the SNF2/RAD54 helicase family.

The protein resides in the cytoplasm. The protein localises to the nucleus. The enzyme catalyses ATP + H2O = ADP + phosphate + H(+). Functionally, DNA helicase that possesses intrinsic ATP-dependent nucleosome-remodeling activity and is required for heterochromatin organization. This is ATP-dependent helicase fft2 (fft2) from Schizosaccharomyces pombe (strain 972 / ATCC 24843) (Fission yeast).